The following is a 374-amino-acid chain: Copper-containing nitrite reductase (374 aa).

Residues 1–31 constitute a signal peptide (tat-type signal); sequence MFTRRAALVGAAALASAPLVIRTAGAEEAPA. 2 consecutive Plastocyanin-like domains span residues 93 to 189 and 254 to 355; these read MTFD…IMVL and GAVG…VLVE. Residues His126, His131, His166, Cys167, His177, Met182, and His338 each coordinate Cu cation.

Belongs to the multicopper oxidase family. Homotrimer. Cu(2+) is required as a cofactor. Requires Cu(+) as cofactor. It depends on FAD as a cofactor. Post-translationally, predicted to be exported by the Tat system. The position of the signal peptide cleavage has not been experimentally proven.

It localises to the periplasm. It carries out the reaction nitric oxide + Fe(III)-[cytochrome c] + H2O = Fe(II)-[cytochrome c] + nitrite + 2 H(+). The protein operates within nitrogen metabolism; nitrate reduction (denitrification); dinitrogen from nitrate: step 2/4. The polypeptide is Copper-containing nitrite reductase (nirK) (Cereibacter sphaeroides (strain ATCC 17025 / ATH 2.4.3) (Rhodobacter sphaeroides)).